The chain runs to 63 residues: Large ribosomal subunit protein uL29 (63 aa).

This sequence belongs to the universal ribosomal protein uL29 family.

This is Large ribosomal subunit protein uL29 from Stutzerimonas stutzeri (strain A1501) (Pseudomonas stutzeri).